We begin with the raw amino-acid sequence, 101 residues long: Large ribosomal subunit protein uL23 (101 aa).

Belongs to the universal ribosomal protein uL23 family. Part of the 50S ribosomal subunit. Contacts protein L29, and trigger factor when it is bound to the ribosome.

Its function is as follows. One of the early assembly proteins it binds 23S rRNA. One of the proteins that surrounds the polypeptide exit tunnel on the outside of the ribosome. Forms the main docking site for trigger factor binding to the ribosome. The chain is Large ribosomal subunit protein uL23 from Haemophilus ducreyi (strain 35000HP / ATCC 700724).